Here is a 1041-residue protein sequence, read N- to C-terminus: Importin-9 (1041 aa).

A2 bears the N-acetylalanine mark. The Importin N-terminal domain maps to 43–119 (AEEQIKVLEV…RELLPNGLRE (77 aa)). The disordered stretch occupies residues 936–967 (QATPAEWSQDDSNDMWEDQEEEEEEEEDGLAG). Positions 943–964 (SQDDSNDMWEDQEEEEEEEEDG) are enriched in acidic residues.

This sequence belongs to the importin beta family. In terms of assembly, interacts with histones H2A, H2B, H3 and H4. The binding is coupled to RanGTP cycles. Interacts with AKIRIN2; promoting association with pre-assembled proteasomes. Associates with pre-assembled proteasomes; interaction is indirect and mediated via interaction with AKIRIN2. Interacts with PPP2R1A and PPP2R1B.

Its subcellular location is the cytoplasm. The protein resides in the nucleus. In terms of biological role, nuclear transport receptor that mediates nuclear import of proteins, such as histones, proteasome and actin. Serves as receptor for nuclear localization signals (NLS) in cargo substrates. Is thought to mediate docking of the importin/substrate complex to the nuclear pore complex (NPC) through binding to nucleoporin and the complex is subsequently translocated through the pore by an energy requiring, Ran-dependent mechanism. At the nucleoplasmic side of the NPC, Ran binds to the importin, the importin/substrate complex dissociates and importin is re-exported from the nucleus to the cytoplasm where GTP hydrolysis releases Ran. The directionality of nuclear import is thought to be conferred by an asymmetric distribution of the GTP- and GDP-bound forms of Ran between the cytoplasm and nucleus. Mediates the import of pre-assembled proteasomes into the nucleus; AKIRIN2 acts as a molecular bridge between IPO9 and the proteasome complex. Mediates the nuclear import of histones H2A, H2B, H4 and H4. In addition to nuclear import, also acts as a chaperone for histones by preventing inappropriate non-nucleosomal interactions. Mediates the nuclear import of actin. The polypeptide is Importin-9 (Homo sapiens (Human)).